We begin with the raw amino-acid sequence, 428 residues long: Phosphomethylpyrimidine synthase 2 (428 aa).

Residues Asn-65, Met-94, Tyr-123, His-158, 180–182, 221–224, and Glu-260 contribute to the substrate site; these read SRG and DGMR. His-264 lines the Zn(2+) pocket. A substrate-binding site is contributed by Tyr-287. His-328 contacts Zn(2+). [4Fe-4S] cluster is bound by residues Cys-405, Cys-408, and Cys-412.

This sequence belongs to the ThiC family. [4Fe-4S] cluster is required as a cofactor.

The catalysed reaction is 5-amino-1-(5-phospho-beta-D-ribosyl)imidazole + S-adenosyl-L-methionine = 4-amino-2-methyl-5-(phosphooxymethyl)pyrimidine + CO + 5'-deoxyadenosine + formate + L-methionine + 3 H(+). Its pathway is cofactor biosynthesis; thiamine diphosphate biosynthesis. Its function is as follows. Catalyzes the synthesis of the hydroxymethylpyrimidine phosphate (HMP-P) moiety of thiamine from aminoimidazole ribotide (AIR) in a radical S-adenosyl-L-methionine (SAM)-dependent reaction. This chain is Phosphomethylpyrimidine synthase 2, found in Methanosarcina barkeri (strain Fusaro / DSM 804).